Here is a 312-residue protein sequence, read N- to C-terminus: Glyceraldehyde-3-phosphate dehydrogenase, cytosolic (312 aa).

Residues 5–6 (RI) and Asp-27 contribute to the NAD(+) site. Residues 144–146 (SCT), Thr-175, 204–205 (TG), and Arg-227 contribute to the D-glyceraldehyde 3-phosphate site. The active-site Nucleophile is Cys-145. Asn-309 contacts NAD(+).

This sequence belongs to the glyceraldehyde-3-phosphate dehydrogenase family. As to quaternary structure, homotetramer.

It is found in the cytoplasm. The enzyme catalyses D-glyceraldehyde 3-phosphate + phosphate + NAD(+) = (2R)-3-phospho-glyceroyl phosphate + NADH + H(+). It functions in the pathway carbohydrate degradation; glycolysis; pyruvate from D-glyceraldehyde 3-phosphate: step 1/5. Key enzyme in glycolysis that catalyzes the first step of the pathway by converting D-glyceraldehyde 3-phosphate (G3P) into 3-phospho-D-glyceroyl phosphate. Essential for the maintenance of cellular ATP levels and carbohydrate metabolism. The protein is Glyceraldehyde-3-phosphate dehydrogenase, cytosolic (GapC) of Scenedesmus vacuolatus (Green alga).